The primary structure comprises 252 residues: Origin recognition complex subunit 6 (252 aa).

The residue at position 195 (T195) is a Phosphothreonine. Residue K210 forms a Glycyl lysine isopeptide (Lys-Gly) (interchain with G-Cter in SUMO2) linkage. A Phosphothreonine modification is found at T229.

This sequence belongs to the ORC6 family. As to quaternary structure, component of ORC, a complex composed of at least 6 subunits: ORC1, ORC2, ORC3, ORC4, ORC5 and ORC6. ORC is regulated in a cell-cycle dependent manner. It is sequentially assembled at the exit from anaphase of mitosis and disassembled as cells enter S phase. Interacts with DBF4.

The protein localises to the nucleus. Its function is as follows. Component of the origin recognition complex (ORC) that binds origins of replication. DNA-binding is ATP-dependent. The specific DNA sequences that define origins of replication have not been identified yet. ORC is required to assemble the pre-replication complex necessary to initiate DNA replication. The protein is Origin recognition complex subunit 6 (ORC6) of Bos taurus (Bovine).